Consider the following 338-residue polypeptide: Ketol-acid reductoisomerase (NADP(+)) (338 aa).

In terms of domain architecture, KARI N-terminal Rossmann spans 1–181; it reads MTVYYDKDCN…GGGRTAIIET (181 aa). Residues 24-27, Arg47, Ser52, and 82-85 each bind NADP(+); these read FGSQ and DENQ. His107 is a catalytic residue. Gly133 is an NADP(+) binding site. In terms of domain architecture, KARI C-terminal knotted spans 182 to 327; that stretch reads TFKDETETDL…VKLRTMMPWI (146 aa). Mg(2+) is bound by residues Asp190, Glu194, Glu226, and Glu230. Ser251 is a binding site for substrate.

It belongs to the ketol-acid reductoisomerase family. It depends on Mg(2+) as a cofactor.

It carries out the reaction (2R)-2,3-dihydroxy-3-methylbutanoate + NADP(+) = (2S)-2-acetolactate + NADPH + H(+). The catalysed reaction is (2R,3R)-2,3-dihydroxy-3-methylpentanoate + NADP(+) = (S)-2-ethyl-2-hydroxy-3-oxobutanoate + NADPH + H(+). Its pathway is amino-acid biosynthesis; L-isoleucine biosynthesis; L-isoleucine from 2-oxobutanoate: step 2/4. It functions in the pathway amino-acid biosynthesis; L-valine biosynthesis; L-valine from pyruvate: step 2/4. Involved in the biosynthesis of branched-chain amino acids (BCAA). Catalyzes an alkyl-migration followed by a ketol-acid reduction of (S)-2-acetolactate (S2AL) to yield (R)-2,3-dihydroxy-isovalerate. In the isomerase reaction, S2AL is rearranged via a Mg-dependent methyl migration to produce 3-hydroxy-3-methyl-2-ketobutyrate (HMKB). In the reductase reaction, this 2-ketoacid undergoes a metal-dependent reduction by NADPH to yield (R)-2,3-dihydroxy-isovalerate. This Sulfurimonas denitrificans (strain ATCC 33889 / DSM 1251) (Thiomicrospira denitrificans (strain ATCC 33889 / DSM 1251)) protein is Ketol-acid reductoisomerase (NADP(+)).